The sequence spans 62 residues: Large ribosomal subunit protein uL30 (62 aa).

The protein belongs to the universal ribosomal protein uL30 family. As to quaternary structure, part of the 50S ribosomal subunit.

The protein is Large ribosomal subunit protein uL30 of Heliobacterium modesticaldum (strain ATCC 51547 / Ice1).